The primary structure comprises 224 residues: Peptidyl-tRNA hydrolase (224 aa).

Tyr27 contributes to the tRNA binding site. Residue His32 is the Proton acceptor of the active site. Tyr78, Asn80, and Asn126 together coordinate tRNA. Positions 203-215 (LSGPSSDLDGSNP) are enriched in low complexity. The disordered stretch occupies residues 203 to 224 (LSGPSSDLDGSNPAPGHGEASS).

Belongs to the PTH family. As to quaternary structure, monomer.

Its subcellular location is the cytoplasm. The catalysed reaction is an N-acyl-L-alpha-aminoacyl-tRNA + H2O = an N-acyl-L-amino acid + a tRNA + H(+). Its function is as follows. Hydrolyzes ribosome-free peptidyl-tRNAs (with 1 or more amino acids incorporated), which drop off the ribosome during protein synthesis, or as a result of ribosome stalling. Functionally, catalyzes the release of premature peptidyl moieties from peptidyl-tRNA molecules trapped in stalled 50S ribosomal subunits, and thus maintains levels of free tRNAs and 50S ribosomes. This chain is Peptidyl-tRNA hydrolase, found in Synechococcus sp. (strain JA-2-3B'a(2-13)) (Cyanobacteria bacterium Yellowstone B-Prime).